Here is a 400-residue protein sequence, read N- to C-terminus: Probable aspartate/prephenate aminotransferase (400 aa).

Positions 39, 125, and 175 each coordinate L-aspartate. Lys239 is subject to N6-(pyridoxal phosphate)lysine. L-aspartate is bound at residue Arg375.

The protein belongs to the class-I pyridoxal-phosphate-dependent aminotransferase family. Homodimer. Requires pyridoxal 5'-phosphate as cofactor.

The protein localises to the cytoplasm. It catalyses the reaction L-aspartate + 2-oxoglutarate = oxaloacetate + L-glutamate. The enzyme catalyses L-arogenate + 2-oxoglutarate = prephenate + L-glutamate. In terms of biological role, catalyzes the reversible conversion of aspartate and 2-oxoglutarate to glutamate and oxaloacetate. Can also transaminate prephenate in the presence of glutamate. The polypeptide is Probable aspartate/prephenate aminotransferase (aspC) (Rhizobium leguminosarum bv. phaseoli).